A 456-amino-acid polypeptide reads, in one-letter code: Chromosomal replication initiator protein DnaA (456 aa).

Residues 1–79 (MSQEIWADVL…QHPQVSFQVL (79 aa)) are domain I, interacts with DnaA modulators. Positions 79–112 (LPASQDALLLPSDPPPAPISPGRAPAPPPADNRK) are domain II. The segment at 89–112 (PSDPPPAPISPGRAPAPPPADNRK) is disordered. The segment covering 90 to 108 (SDPPPAPISPGRAPAPPPA) has biased composition (pro residues). A domain III, AAA+ region region spans residues 113 to 329 (TLNPKYTFEN…GALMRVVAFS (217 aa)). The ATP site is built by glycine 157, glycine 159, lysine 160, and threonine 161. Positions 330–456 (SLNNVPFSRA…KGLEDEDSRA (127 aa)) are domain IV, binds dsDNA.

The protein belongs to the DnaA family. Oligomerizes as a right-handed, spiral filament on DNA at oriC.

The protein resides in the cytoplasm. Plays an essential role in the initiation and regulation of chromosomal replication. ATP-DnaA binds to the origin of replication (oriC) to initiate formation of the DNA replication initiation complex once per cell cycle. Binds the DnaA box (a 9 base pair repeat at the origin) and separates the double-stranded (ds)DNA. Forms a right-handed helical filament on oriC DNA; dsDNA binds to the exterior of the filament while single-stranded (ss)DNA is stabiized in the filament's interior. The ATP-DnaA-oriC complex binds and stabilizes one strand of the AT-rich DNA unwinding element (DUE), permitting loading of DNA polymerase. After initiation quickly degrades to an ADP-DnaA complex that is not apt for DNA replication. Binds acidic phospholipids. The polypeptide is Chromosomal replication initiator protein DnaA (Deinococcus deserti (strain DSM 17065 / CIP 109153 / LMG 22923 / VCD115)).